The following is a 477-amino-acid chain: MEKAEFQVIIVGGSIGGLTLAHCLHRAGIKHVVLEKASDPAPQIGASIGILPNGARVLDQLQLYDQVEEHIEPLSKATIGLPDGFNFSSSYPKIIDQRFGFPIAFLDRQKMLEILYKGYPDPSKIRLGQRVTSIESLDDGVLITTTTGHVYRGDLLVGADGVHSIVRREIWKARGIARRVSKIKQDSSKLTVEFRCIFGISSAMPGLKLGEQVNALFDGLTIVTIHGKDGRIYWFVIQKLGKKYVYPDSPRYTSHETSIAAEEIRDVKFYENITFGELWDKRETSSMTALEENTFKVWHHGRCVLLGDSVHKMTPNVGQGANMAIEDAAALANLLRKMRISSGPYFPTSSQMEFLLQKYRDLRYERVNTIYQSSRFLVRFQVRDGIIYSLLSRYWAPYAGDLPADMASKTIADGTMCDFLPTPKRSGGGWEKYSKQGRSWSYLTQLMIYLFGLTIVYTSLTMMFDLEGALKFYFLQV.

Residues 4-24 (AEFQVIIVGGSIGGLTLAHCL) traverse the membrane as a helical segment. Residues glutamate 35, glycine 49, and arginine 108 each coordinate FAD. Arginine 195 is a catalytic residue. Aspartate 308 and alanine 321 together coordinate FAD. Residues 446 to 466 (LMIYLFGLTIVYTSLTMMFDL) form a helical membrane-spanning segment.

The protein belongs to the paxM FAD-dependent monooxygenase family. Requires FAD as cofactor.

It localises to the membrane. The protein operates within secondary metabolite biosynthesis. Its function is as follows. FAD-dependent monooxygenase; part of the gene cluster that mediates the biosynthesis of paxilline, a mycotoxin that acts as an inhibitor of mammalian maxi-K channels. PaxG, the geranylgeranyl diphosphate (GGPP) synthase is proposed to catalyze the first step in paxilline biosynthesis. Condensation of indole-3-glycerol phosphate with GGPP by paxC then forms 3-geranylgeranylindole (3-GGI), followed by epoxidation and cyclization of this intermediate (by paxM and paxB) to form paspaline. Paspaline is subsequently converted to 13-desoxypaxilline by paxP, the latter being then converted to paxilline by paxQ. Finally paxilline can be mono- and di-prenylated by paxD. In Penicillium paxilli, this protein is FAD-dependent monooxygenase paxM.